The primary structure comprises 132 residues: DNA-directed RNA polymerase subunit omega (132 aa).

The protein belongs to the RNA polymerase subunit omega family. As to quaternary structure, the RNAP catalytic core consists of 2 alpha, 1 beta, 1 beta' and 1 omega subunit. When a sigma factor is associated with the core the holoenzyme is formed, which can initiate transcription.

The enzyme catalyses RNA(n) + a ribonucleoside 5'-triphosphate = RNA(n+1) + diphosphate. Promotes RNA polymerase assembly. Latches the N- and C-terminal regions of the beta' subunit thereby facilitating its interaction with the beta and alpha subunits. This chain is DNA-directed RNA polymerase subunit omega, found in Bartonella quintana (strain Toulouse) (Rochalimaea quintana).